The chain runs to 31 residues: Photosystem II reaction center protein T (31 aa).

Residues 3–23 (ALVYTFLLVGTLGIIFFSIFF) traverse the membrane as a helical segment.

It belongs to the PsbT family. PSII is composed of 1 copy each of membrane proteins PsbA, PsbB, PsbC, PsbD, PsbE, PsbF, PsbH, PsbI, PsbJ, PsbK, PsbL, PsbM, PsbT, PsbY, PsbZ, Psb30/Ycf12, at least 3 peripheral proteins of the oxygen-evolving complex and a large number of cofactors. It forms dimeric complexes.

It is found in the plastid. It localises to the chloroplast thylakoid membrane. Found at the monomer-monomer interface of the photosystem II (PS II) dimer, plays a role in assembly and dimerization of PSII. PSII is a light-driven water plastoquinone oxidoreductase, using light energy to abstract electrons from H(2)O, generating a proton gradient subsequently used for ATP formation. The protein is Photosystem II reaction center protein T of Tupiella akineta (Green alga).